A 398-amino-acid polypeptide reads, in one-letter code: E3 ubiquitin-protein ligase RSL1 (398 aa).

The tract at residues 155–374 (QKETCNICLN…LDLTQCCGSC (220 aa)) is TRIAD supradomain. Residues Cys159, Cys162, Cys183, Cys186, Cys246, Cys251, Cys271, Cys274, Cys279, Cys282, His287, Cys292, Cys321, and Cys324 each coordinate Zn(2+). An RING-type 3; degenerate zinc finger spans residues 159-207 (CNICLNDDINADQMFSVDKSGHMCCSECVKRHIEVRLLEGSLITCPHYR). The RING-type 1 zinc finger occupies 159–208 (CNICLNDDINADQMFSVDKSGHMCCSECVKRHIEVRLLEGSLITCPHYRC). The IBR-type zinc finger occupies 233–292 (TKDELIPVMDRVYCPNPRCSTLMSETELSGLNIGVRRCCVKCGEPFCVKCKVSWHNNLSC). Residues 321 to 349 (CSKCKHMIELSSGCISVVCRCGHTFCYQC) form an RING-type 2; atypical zinc finger. The segment at 321 to 356 (CSKCKHMIELSSGCISVVCRCGHTFCYQCGADAGDC) adopts an RING-type 4; degenerate zinc-finger fold. Cys334 is a catalytic residue. Positions 339, 341, 346, 349, 358, and 370 each coordinate Zn(2+). A helical transmembrane segment spans residues 374–394 (CCCFVFFLVIIAIVVTIILLV).

Belongs to the RBR family. Interacts with the PYL4 and PYR1 ABA receptors at the plasma membrane. It depends on Zn(2+) as a cofactor.

It is found in the cell membrane. The protein localises to the vacuole membrane. The enzyme catalyses [E2 ubiquitin-conjugating enzyme]-S-ubiquitinyl-L-cysteine + [acceptor protein]-L-lysine = [E2 ubiquitin-conjugating enzyme]-L-cysteine + [acceptor protein]-N(6)-ubiquitinyl-L-lysine.. It functions in the pathway protein modification; protein ubiquitination. Functionally, acts as an E3 ubiquitin-protein ligase, or as part of E3 complex, which accepts ubiquitin from specific E2 ubiquitin-conjugating enzymes and then transfers it to substrates. Negative regulator of the abscisic acid (ABA) signaling pathway which targets PYL4 and PYR1 ABA receptors in plasma membrane to promote their FREE1/FYVE1-dependent trafficking and degradation upon ubiquitynation; this process involves clathrin-mediated endocytosis and trafficking through the ESCRT pathway. Involved in the maintenance of seed longevity. May enhance gibberellins responses. This is E3 ubiquitin-protein ligase RSL1 from Arabidopsis thaliana (Mouse-ear cress).